The primary structure comprises 391 residues: Alkanesulfonate monooxygenase (391 aa).

It belongs to the SsuD family.

It carries out the reaction an alkanesulfonate + FMNH2 + O2 = an aldehyde + FMN + sulfite + H2O + 2 H(+). Functionally, catalyzes the desulfonation of aliphatic sulfonates. The polypeptide is Alkanesulfonate monooxygenase (Rhodopseudomonas palustris (strain TIE-1)).